Consider the following 229-residue polypeptide: Aspartate-rich protein 1 (229 aa).

A disordered region spans residues 84-106 (SEEDNDDAKILPSPVQGSSEDNL).

This Homo sapiens (Human) protein is Aspartate-rich protein 1 (DRICH1).